A 227-amino-acid polypeptide reads, in one-letter code: MAYPFQLGLQDATSPIMEELTNFHDHTLMIVFLISSLVLYIISLMLTTKLTHTSTMDAQEVETIWTILPAAILVLIALPSLRILYMMDEINNPVLTVKTMGHQWYWSYEYTDYEDLCFDSYMVPTNELKPGELRLLEVDNRVVLPMELPIRMLISSEDVLHSWAVPSLGLKTDAIPGRLNQATVTSNRPGLFYGQCSEICGSNHSFMPIVLEMVPLKYFESWSASMI.

Over 1-14 the chain is Mitochondrial intermembrane; that stretch reads MAYPFQLGLQDATS. Residues 15 to 45 traverse the membrane as a helical segment; it reads PIMEELTNFHDHTLMIVFLISSLVLYIISLM. Topologically, residues 46–59 are mitochondrial matrix; sequence LTTKLTHTSTMDAQ. A helical transmembrane segment spans residues 60–87; sequence EVETIWTILPAAILVLIALPSLRILYMM. The Mitochondrial intermembrane portion of the chain corresponds to 88 to 227; the sequence is DEINNPVLTV…YFESWSASMI (140 aa). Positions 161, 196, 198, 200, 204, and 207 each coordinate Cu cation. Glu198 is a binding site for Mg(2+). Tyr218 bears the Phosphotyrosine mark.

Belongs to the cytochrome c oxidase subunit 2 family. Component of the cytochrome c oxidase (complex IV, CIV), a multisubunit enzyme composed of 14 subunits. The complex is composed of a catalytic core of 3 subunits MT-CO1, MT-CO2 and MT-CO3, encoded in the mitochondrial DNA, and 11 supernumerary subunits COX4I, COX5A, COX5B, COX6A, COX6B, COX6C, COX7A, COX7B, COX7C, COX8 and NDUFA4, which are encoded in the nuclear genome. The complex exists as a monomer or a dimer and forms supercomplexes (SCs) in the inner mitochondrial membrane with NADH-ubiquinone oxidoreductase (complex I, CI) and ubiquinol-cytochrome c oxidoreductase (cytochrome b-c1 complex, complex III, CIII), resulting in different assemblies (supercomplex SCI(1)III(2)IV(1) and megacomplex MCI(2)III(2)IV(2)). Found in a complex with TMEM177, COA6, COX18, COX20, SCO1 and SCO2. Interacts with TMEM177 in a COX20-dependent manner. Interacts with COX20. Interacts with COX16. Cu cation serves as cofactor.

The protein resides in the mitochondrion inner membrane. It carries out the reaction 4 Fe(II)-[cytochrome c] + O2 + 8 H(+)(in) = 4 Fe(III)-[cytochrome c] + 2 H2O + 4 H(+)(out). Its function is as follows. Component of the cytochrome c oxidase, the last enzyme in the mitochondrial electron transport chain which drives oxidative phosphorylation. The respiratory chain contains 3 multisubunit complexes succinate dehydrogenase (complex II, CII), ubiquinol-cytochrome c oxidoreductase (cytochrome b-c1 complex, complex III, CIII) and cytochrome c oxidase (complex IV, CIV), that cooperate to transfer electrons derived from NADH and succinate to molecular oxygen, creating an electrochemical gradient over the inner membrane that drives transmembrane transport and the ATP synthase. Cytochrome c oxidase is the component of the respiratory chain that catalyzes the reduction of oxygen to water. Electrons originating from reduced cytochrome c in the intermembrane space (IMS) are transferred via the dinuclear copper A center (CU(A)) of subunit 2 and heme A of subunit 1 to the active site in subunit 1, a binuclear center (BNC) formed by heme A3 and copper B (CU(B)). The BNC reduces molecular oxygen to 2 water molecules using 4 electrons from cytochrome c in the IMS and 4 protons from the mitochondrial matrix. The protein is Cytochrome c oxidase subunit 2 (MT-CO2) of Conilurus penicillatus (Brush-tailed rabbit-rat).